A 421-amino-acid chain; its full sequence is Gamma-glutamyl phosphate reductase (421 aa).

This sequence belongs to the gamma-glutamyl phosphate reductase family.

Its subcellular location is the cytoplasm. The catalysed reaction is L-glutamate 5-semialdehyde + phosphate + NADP(+) = L-glutamyl 5-phosphate + NADPH + H(+). Its pathway is amino-acid biosynthesis; L-proline biosynthesis; L-glutamate 5-semialdehyde from L-glutamate: step 2/2. Catalyzes the NADPH-dependent reduction of L-glutamate 5-phosphate into L-glutamate 5-semialdehyde and phosphate. The product spontaneously undergoes cyclization to form 1-pyrroline-5-carboxylate. This is Gamma-glutamyl phosphate reductase from Acinetobacter baylyi (strain ATCC 33305 / BD413 / ADP1).